Here is a 484-residue protein sequence, read N- to C-terminus: Fumigaclavine B O-acetyltransferase ifgI (484 aa).

Belongs to the fumigaclavine B O-acetyltransferase family. As to quaternary structure, monomer.

It catalyses the reaction fumigaclavine B + acetyl-CoA = fumigaclavine A + CoA. It functions in the pathway alkaloid biosynthesis; ergot alkaloid biosynthesis. Its function is as follows. Fumigaclavine B O-acetyltransferase; part of the gene cluster that mediates the biosynthesis of isofumigaclavines, fungal ergot alkaloids. The tryptophan dimethylallyltransferase ifgA catalyzes the first step of ergot alkaloid biosynthesis by condensing dimethylallyl diphosphate (DMAP) and tryptophan to form 4-dimethylallyl-L-tryptophan. The second step is catalyzed by the methyltransferase ifgB that methylates 4-dimethylallyl-L-tryptophan in the presence of S-adenosyl-L-methionine, resulting in the formation of N-methyl-dimethylallyl-L-tryptophan. The catalase ifgD and the FAD-dependent oxidoreductase ifgC then transform N-methyl-dimethylallyl-L-tryptophan to chanoclavine-I which is further oxidized by ifgE in the presence of NAD(+), resulting in the formation of chanoclavine-I aldehyde. The chanoclavine-I aldehyde reductases ifgG and/or fgaOx3 reduce chanoclavine-I aldehyde to dihydrochanoclavine-I aldehyde that spontaneously dehydrates to form 6,8-dimethyl-6,7-didehydroergoline. The festuclavine dehydrogenases ifgF1 and/or ifgF2 then catalyze the reduction of 6,8-dimethyl-6,7-didehydroergoline to form festuclavine. Hydrolysis of festuclavine by a yet undetermined cytochrome P450 monooxygenase (called ifgH) then leads to the formation of isofumigaclavine B which is in turn acetylated by ifgI to isofumigaclavine A. Penicillium roqueforti has interestingly at least two sets of genes for the consumption of chanoclavine-I aldehyde on three different loci, the OYEs ifgG/fgaOx3 and the festuclavine synthase homologs ifgF1/ifgF2. The reason for the duplication of these genes is unclear, probably to ensure the conversion of chanoclavine-I aldehyde by differential gene expression under various environmental conditions. The chain is Fumigaclavine B O-acetyltransferase ifgI from Penicillium roqueforti (strain FM164).